We begin with the raw amino-acid sequence, 147 residues long: Large ribosomal subunit protein uL13 (147 aa).

Belongs to the universal ribosomal protein uL13 family. Part of the 50S ribosomal subunit.

Its function is as follows. This protein is one of the early assembly proteins of the 50S ribosomal subunit, although it is not seen to bind rRNA by itself. It is important during the early stages of 50S assembly. In Corynebacterium glutamicum (strain R), this protein is Large ribosomal subunit protein uL13.